The chain runs to 373 residues: 3 beta-hydroxysteroid dehydrogenase/Delta 5--&gt;4-isomerase type 1 (373 aa).

NADP(+) is bound by residues 10 to 15 (GAGGFV), tyrosine 155, and lysine 159. Lysine 159 functions as the Proton donor in the catalytic mechanism. Residues 288-308 (LPLLYWLAFLLETVSFLLRPV) traverse the membrane as a helical segment.

The protein belongs to the 3-beta-HSD family. As to expression, steroidogenic tissues (includes testes, ovaries and adrenal glands).

It is found in the endoplasmic reticulum membrane. The protein resides in the mitochondrion membrane. The catalysed reaction is a 3beta-hydroxy-Delta(5)-steroid + NAD(+) = a 3-oxo-Delta(5)-steroid + NADH + H(+). The enzyme catalyses pregnenolone + NAD(+) = pregn-5-ene-3,20-dione + NADH + H(+). It carries out the reaction 3beta-hydroxyandrost-5-en-17-one + NAD(+) = androst-5-ene-3,17-dione + NADH + H(+). It catalyses the reaction androst-5-en-3beta,17beta-diol + NAD(+) = 17beta-hydroxy-androst-5-en-3-one + NADH + H(+). The catalysed reaction is a 3beta-hydroxysteroid + NADP(+) = a 3-oxosteroid + NADPH + H(+). The enzyme catalyses 5alpha-androstane-3beta,17beta-diol + NADP(+) = 17beta-hydroxy-5alpha-androstan-3-one + NADPH + H(+). It carries out the reaction 3beta-hydroxy-5alpha-androstan-17-one + NADP(+) = 5alpha-androstan-3,17-dione + NADPH + H(+). It catalyses the reaction a 3-oxo-Delta(5)-steroid = a 3-oxo-Delta(4)-steroid. The catalysed reaction is pregn-5-ene-3,20-dione = progesterone. The enzyme catalyses androst-5-ene-3,17-dione = androst-4-ene-3,17-dione. It carries out the reaction 17beta-hydroxy-androst-5-en-3-one = testosterone. It catalyses the reaction 5alpha-androstane-3beta,17beta-diol + NAD(+) = 17beta-hydroxy-5alpha-androstan-3-one + NADH + H(+). It participates in steroid hormone biosynthesis. The protein operates within steroid metabolism. A bifunctional enzyme responsible for the oxidation and isomerization of 3beta-hydroxy-Delta(5)-steroid precursors to 3-oxo-Delta(4)-steroids, an essential step in steroid hormone biosynthesis. Specifically catalyzes the conversion of pregnenolone to progesterone, 17alpha-hydroxypregnenolone to 17alpha-hydroxyprogesterone, dehydroepiandrosterone (DHEA) to 4-androstenedione, and androstenediol to testosterone. Additionally, catalyzes the interconversion between 3beta-hydroxy and 3-oxo-5alpha-androstane steroids controlling the bioavalability of the active forms. Specifically converts dihydrotestosterone to its inactive form 5alpha-androstanediol, that does not bind androgen receptor/AR. Also converts androstanedione, a precursor of testosterone and estrone, to epiandrosterone. Expected to use NAD(+) as preferred electron donor for the 3-beta-hydroxy-steroid dehydrogenase activity and NADPH for the 3-ketosteroid reductase activity. This is 3 beta-hydroxysteroid dehydrogenase/Delta 5--&gt;4-isomerase type 1 from Mus musculus (Mouse).